Consider the following 138-residue polypeptide: MKSFVLATCLLGFAQIIYADNKELKIIRKDVAECLRTLPKCGNQPDDPLARVDVWHCAMAKRGVYDNPDPAVIKERSMKMCTKIITDPANVENCKKVASRCVDRETQGPKSNRQKAVNIIGCALRAGVAETTVLARKK.

A signal peptide spans 1 to 19; sequence MKSFVLATCLLGFAQIIYA. 3 disulfide bridges follow: Cys-34–Cys-57, Cys-81–Cys-94, and Cys-101–Cys-122.

This sequence belongs to the ant venom allergen 2/4 family. In terms of assembly, homodimer; disulfide-linked. As to expression, expressed by the venom gland.

The protein resides in the secreted. This Solenopsis invicta (Red imported fire ant) protein is Venom allergen 2.